The following is a 91-amino-acid chain: MSLRKLTEGDLDEISSFLHNTISDFILKRVSAKEIVDIDITVLVEYTDELKVDISAELYLDELSDADPGIVDEAVDAAYRSLESFLDGFRE.

This sequence belongs to the UPF0440 family.

This is an uncharacterized protein from Methanothermobacter thermautotrophicus (strain ATCC 29096 / DSM 1053 / JCM 10044 / NBRC 100330 / Delta H) (Methanobacterium thermoautotrophicum).